A 525-amino-acid polypeptide reads, in one-letter code: MESLVVHTVNAIWCIVIVGIFSVGYHVYGRAVVEQWRMRRSLKLQGVKGPPPSIFNGNVSEMQRIQSEAKHCSGDNIISHDYSSSLFPHFDHWRKQYGRIYTYSTGLKQHLYINHPEMVKELSQTNTLNLGRITHITKRLNPILGNGIITSNGPHWAHQRRIIAYEFTHDKIKGMVGLMVESAMPMLNKWEEMVKRGGEMGCDIRVDEDLKDVSADVIAKACFGSSFSKGKAIFSMIRDLLTAITKRSVLFRFNGFTDMVFGSKKHGDVDIDALEMELESSIWETVKEREIECKDTHKKDLMQLILEGAMRSCDGNLWDKSAYRRFVVDNCKSIYFAGHDSTAVSVSWCLMLLALNPSWQVKIRDEILSSCKNGIPDAESIPNLKTVTMVIQETMRLYPPAPIVGREASKDIRLGDLVVPKGVCIWTLIPALHRDPEIWGPDANDFKPERFSEGISKACKYPQSYIPFGLGPRTCVGKNFGMMEVKVLVSLIVSKFSFTLSPTYQHSPSHKLLVEPQHGVVIRVV.

Over 1–3 (MES) the chain is Lumenal. Residues 4-24 (LVVHTVNAIWCIVIVGIFSVG) form a helical; Signal-anchor for type III membrane protein membrane-spanning segment. Over 25 to 525 (YHVYGRAVVE…PQHGVVIRVV (501 aa)) the chain is Cytoplasmic. Position 475 (Cys475) interacts with heme.

This sequence belongs to the cytochrome P450 family. It depends on heme as a cofactor. As to expression, expressed in the shoot apical meristem (SAM) and petioles of young leaves, in the leaf margin and petiole vein of cotyledons, and at low levels in the filaments of developing flowers. Not detected in siliques.

It localises to the endoplasmic reticulum membrane. Its function is as follows. Involved in the inactivation of early gibberellin (GA) intermediates. This is Cytochrome P450 714A2 (CYP714A2) from Arabidopsis thaliana (Mouse-ear cress).